The chain runs to 386 residues: MASALEAIKYDRGRLFIIDQLQLPHVTKFIPIDSSEAGWHAIKAMQVRGAPAIAIVAVLSLAVEMLNLVSENMIPEDGEDVRAYIEQKMDYLVSSRPTAVNLSDSAQKIKLLLDQRARKSGLSGVETAMAFIQHAEQMLARDLADNHSIGEYGATWILKNTRAALEGGNTCVLTHCNTGSLATAGYGTALGIIRRLHEHGRLSRAYCTETRPYNQGARLTAYELVSDKIPATLITDSMAGQLLANPDKKIAAIVVGADRVAANGDTANKIGTYTLAVLAKFHNIKFVVAAPRTTIDMKTKTGNEIIIEERQSSEVTKIRGPCEGDGDHREAVMETIKIAADGIDVWNPAFDVTPAALIDAIVTEVGVETKDSSGQFHLSSLFESMA.

Asp258 (proton donor) is an active-site residue.

This sequence belongs to the eIF-2B alpha/beta/delta subunits family. MtnA subfamily.

The protein resides in the cytoplasm. It is found in the nucleus. It catalyses the reaction 5-(methylsulfanyl)-alpha-D-ribose 1-phosphate = 5-(methylsulfanyl)-D-ribulose 1-phosphate. Its pathway is amino-acid biosynthesis; L-methionine biosynthesis via salvage pathway; L-methionine from S-methyl-5-thio-alpha-D-ribose 1-phosphate: step 1/6. Catalyzes the interconversion of methylthioribose-1-phosphate (MTR-1-P) into methylthioribulose-1-phosphate (MTRu-1-P). The sequence is that of Methylthioribose-1-phosphate isomerase from Uncinocarpus reesii (strain UAMH 1704).